We begin with the raw amino-acid sequence, 254 residues long: 5-oxoprolinase subunit A (254 aa).

This sequence belongs to the LamB/PxpA family. Forms a complex composed of PxpA, PxpB and PxpC.

It carries out the reaction 5-oxo-L-proline + ATP + 2 H2O = L-glutamate + ADP + phosphate + H(+). Catalyzes the cleavage of 5-oxoproline to form L-glutamate coupled to the hydrolysis of ATP to ADP and inorganic phosphate. In Burkholderia thailandensis (strain ATCC 700388 / DSM 13276 / CCUG 48851 / CIP 106301 / E264), this protein is 5-oxoprolinase subunit A.